Reading from the N-terminus, the 211-residue chain is Large ribosomal subunit protein bL25 (211 aa).

The span at 1-18 (MAKTHEIKAERRADEGKG) shows a compositional bias: basic and acidic residues. The disordered stretch occupies residues 1–20 (MAKTHEIKAERRADEGKGAS).

This sequence belongs to the bacterial ribosomal protein bL25 family. CTC subfamily. Part of the 50S ribosomal subunit; part of the 5S rRNA/L5/L18/L25 subcomplex. Contacts the 5S rRNA. Binds to the 5S rRNA independently of L5 and L18.

Its function is as follows. This is one of the proteins that binds to the 5S RNA in the ribosome where it forms part of the central protuberance. The polypeptide is Large ribosomal subunit protein bL25 (Xanthomonas oryzae pv. oryzae (strain MAFF 311018)).